An 805-amino-acid chain; its full sequence is Leucine--tRNA ligase (805 aa).

A 'HIGH' region motif is present at residues 41-52 (PYPSGAGLHVGH). Residues 577 to 581 (KMSKS) carry the 'KMSKS' region motif. Lys-580 lines the ATP pocket.

The protein belongs to the class-I aminoacyl-tRNA synthetase family.

It is found in the cytoplasm. The enzyme catalyses tRNA(Leu) + L-leucine + ATP = L-leucyl-tRNA(Leu) + AMP + diphosphate. In Staphylococcus aureus (strain USA300), this protein is Leucine--tRNA ligase.